The primary structure comprises 199 residues: BREX protein BrxA (199 aa).

The protein belongs to the BrxA family.

BREX systems (bacteriophage exclusion) provide immunity against bacteriophage. Part of a type 1 BREX system which protects against dsDNA phage. This system allows phage adsorption but prevents phage DNA replication, without degradation of the phage DNA. Methylation of bacterial DNA by PglX guides self/non-self discrimination. The chain is BREX protein BrxA from Paramagnetospirillum magneticum (strain ATCC 700264 / AMB-1) (Magnetospirillum magneticum).